Here is an 88-residue protein sequence, read N- to C-terminus: UPF0297 protein SSU98_0066 (88 aa).

It belongs to the UPF0297 family.

This chain is UPF0297 protein SSU98_0066, found in Streptococcus suis (strain 98HAH33).